Consider the following 266-residue polypeptide: Bax inhibitor 1 (266 aa).

The disordered stretch occupies residues 1 to 22 (MPANYQSVPQDDPSVPNLAQAP). The next 7 helical transmembrane spans lie at 70 to 90 (LFVTSLFGGIFYLHPAFSFWV), 92 to 112 (MHPWFLILNFFISLVVLFGLI), 123 to 143 (IFLFLFTALEGLTLGTAITFF), 147 to 167 (IILEAVFITLGVFVALTAFTF), 177 to 197 (GGFLYVSLWSLILTPLIFFFV), 201 to 221 (PFIDMAFAGFGTLVFCGYILF), and 240 to 260 (LMLYLDFINLFIRILQILGML).

It belongs to the BI1 family. LFG subfamily.

It is found in the endoplasmic reticulum membrane. The protein localises to the mitochondrion membrane. It localises to the golgi apparatus membrane. The protein resides in the vacuole membrane. Links the unfolded protein response and programmed cell death and mediates mitochondrial-dependent apoptosis. Induces cell death and disruption of the mitochondrial transmembrane potential. This Schizosaccharomyces pombe (strain 972 / ATCC 24843) (Fission yeast) protein is Bax inhibitor 1 (bxi1).